A 320-amino-acid polypeptide reads, in one-letter code: uncharacterized protein (320 aa).

An Arf-GAP domain is found at 13–132 (ALVLKSLLRE…VLYPEIPSPE (120 aa)). The C4-type zinc-finger motif lies at 28–52 (CADCKRNEQPRWASWNLGVFICIRC). Disordered regions lie at residues 153-212 (NTAS…STRQ), 227-261 (RPQVSSSSITTNATYQNLPSPVSTSTTSSQPYGAF), and 284-320 (NVTSAQPSARASPVQSNSSRPRSSLDSKIINSHDVWK). Residues 154–176 (TASRSSSAHSVKSTSSATVTNVT) are compositionally biased toward low complexity. Polar residues-rich tracts occupy residues 183–210 (SATTSLAQSSPNLASLSKQPSTVHAPST) and 228–244 (PQVSSSSITTNATYQNL). 2 stretches are compositionally biased toward low complexity: residues 245–257 (PSPVSTSTTSSQP) and 295–310 (SPVQSNSSRPRSSLDS).

Its subcellular location is the cytoplasm. It is found in the golgi apparatus. In terms of biological role, GTPase-activating protein for the ADP ribosylation factor family. This is an uncharacterized protein from Schizosaccharomyces pombe (strain 972 / ATCC 24843) (Fission yeast).